A 355-amino-acid chain; its full sequence is Acyl-CoA desaturase 1 (355 aa).

The Cytoplasmic portion of the chain corresponds to 1–68 (MPAHMLQEIS…EGPPPKLEYV (68 aa)). Low complexity predominate over residues 9 to 20 (ISSSYTTTTTIT). Positions 9–33 (ISSSYTTTTTITAPPSGNEREKVKT) are disordered. A helical transmembrane segment spans residues 69–89 (WRNIILMVLLHLGGLYGIILV). Asn-71 lines the substrate pocket. The Lumenal segment spans residues 90–93 (PSCK). A helical transmembrane segment spans residues 94–114 (LYTCLFGIFYYMTSALGITAG). Over 115–213 (AHRLWSHRTY…EKLVMFQRRY (99 aa)) the chain is Cytoplasmic. Residues His-116 and His-121 each coordinate Fe cation. A Histidine box-1 motif is present at residues 116–121 (HRLWSH). Residues Asn-144, Arg-151, and Asp-152 each coordinate substrate. Residues His-153, His-156, and His-157 each contribute to the Fe cation site. The Histidine box-2 motif lies at 153-157 (HRAHH). Substrate is bound by residues Arg-184 and Lys-185. Residues 214–233 (YKPGLLLMCFILPTLVPWYC) form a helical membrane-spanning segment. Topologically, residues 234–237 (WGET) are lumenal. A helical membrane pass occupies residues 238 to 259 (FVNSLFVSTFLRYTLVLNATWL). Trp-258 serves as a coordination point for substrate. The Cytoplasmic portion of the chain corresponds to 260-355 (VNSAAHLYGY…RTGDGSHKSS (96 aa)). Positions 265, 294, 297, and 298 each coordinate Fe cation. A Histidine box-3 motif is present at residues 294 to 298 (HNYHH).

The protein belongs to the fatty acid desaturase type 1 family. Fe(2+) is required as a cofactor. As to expression, detected in liver (at protein level). Detected in skin and liver. Detected in sebaceous gland, but not in hair follicle. Detected in white and brown adipose tissue, eyelid, Harderian gland, and at lower levels in Meibomian gland, eyeball and adrenal gland. Highly expressed in liver, and detected at low levels in brain, heart, lung, stomach, skeletal muscle and kidney.

It localises to the endoplasmic reticulum membrane. It is found in the microsome membrane. The enzyme catalyses octadecanoyl-CoA + 2 Fe(II)-[cytochrome b5] + O2 + 2 H(+) = (9Z)-octadecenoyl-CoA + 2 Fe(III)-[cytochrome b5] + 2 H2O. Functionally, stearoyl-CoA desaturase that utilizes O(2) and electrons from reduced cytochrome b5 to introduce the first double bond into saturated fatty acyl-CoA substrates. Catalyzes the insertion of a cis double bond at the Delta-9 position into fatty acyl-CoA substrates including palmitoyl-CoA and stearoyl-CoA. Gives rise to a mixture of 16:1 and 18:1 unsaturated fatty acids. Plays an important role in lipid biosynthesis. Plays an important role in regulating the expression of genes that are involved in lipogenesis and in regulating mitochondrial fatty acid oxidation. Plays an important role in body energy homeostasis. Contributes to the biosynthesis of membrane phospholipids, cholesterol esters and triglycerides. Required for normal development of sebaceous glands. Required for the biosynthesis of normal levels of Delta-9 unsaturated fatty acids and 1-alkyl-2,3-diacylglycerol in the Harderian gland. Required for normal production of meibum, an oily material that prevents drying of the cornea. The protein is Acyl-CoA desaturase 1 (Scd1) of Mus musculus (Mouse).